The following is a 55-amino-acid chain: Large ribosomal subunit protein bL33 (55 aa).

Belongs to the bacterial ribosomal protein bL33 family.

This is Large ribosomal subunit protein bL33 from Yersinia enterocolitica serotype O:8 / biotype 1B (strain NCTC 13174 / 8081).